The following is a 145-amino-acid chain: Bacilliredoxin ABC2045 (145 aa).

This sequence belongs to the bacilliredoxin family.

In Shouchella clausii (strain KSM-K16) (Alkalihalobacillus clausii), this protein is Bacilliredoxin ABC2045.